Here is a 292-residue protein sequence, read N- to C-terminus: Tumor necrosis factor alpha-induced protein 8-like protein 3 (292 aa).

Positions 81–107 (DAQPAARSMDSDSGEQSEGEPVTAAGP) are disordered. The segment at 109-292 (VFSSKSLALQ…INKLLDEKVL (184 aa)) is binding to phosphoinositides.

This sequence belongs to the TNFAIP8 family. As to expression, widely expressed (at protein level). Highly expressed in most carcinoma cell lines.

Its subcellular location is the cytoplasm. The protein resides in the cell membrane. Functionally, acts as a lipid transfer protein. Preferentially captures and shuttles two lipid second messengers, i.e., phosphatidylinositol 4,5- bisphosphate and phosphatidylinositol 3,4,5-trisphosphate and increases their levels in the plasma membrane. Additionally, may also function as a lipid-presenting protein to enhance the activity of the PI3K-AKT and MEK-ERK pathways. May act as a regulator of tumorigenesis through its activation of phospholipid signaling. The sequence is that of Tumor necrosis factor alpha-induced protein 8-like protein 3 (TNFAIP8L3) from Homo sapiens (Human).